The sequence spans 494 residues: UDP-N-acetylmuramoyl-L-alanyl-D-glutamate--L-lysine ligase (494 aa).

Residue Ser30 participates in UDP-N-acetyl-alpha-D-muramoyl-L-alanyl-D-glutamate binding. 110–116 contacts ATP; it reads GTNGKTS. Residues 152–153, Ser179, and Arg187 each bind UDP-N-acetyl-alpha-D-muramoyl-L-alanyl-D-glutamate; that span reads TT. Lys219 is subject to N6-carboxylysine. The L-lysine recognition motif motif lies at 406-409; that stretch reads DNPA.

This sequence belongs to the MurCDEF family. MurE subfamily. Carboxylation is probably crucial for Mg(2+) binding and, consequently, for the gamma-phosphate positioning of ATP.

Its subcellular location is the cytoplasm. It catalyses the reaction UDP-N-acetyl-alpha-D-muramoyl-L-alanyl-D-glutamate + L-lysine + ATP = UDP-N-acetyl-alpha-D-muramoyl-L-alanyl-gamma-D-glutamyl-L-lysine + ADP + phosphate + H(+). Its pathway is cell wall biogenesis; peptidoglycan biosynthesis. In terms of biological role, catalyzes the addition of L-lysine to the nucleotide precursor UDP-N-acetylmuramoyl-L-alanyl-D-glutamate (UMAG) in the biosynthesis of bacterial cell-wall peptidoglycan. The sequence is that of UDP-N-acetylmuramoyl-L-alanyl-D-glutamate--L-lysine ligase from Staphylococcus aureus (strain MW2).